Consider the following 207-residue polypeptide: Claudin-11 (207 aa).

Position 1 (methionine 1) is a topological domain, cytoplasmic. Residues 2 to 22 (VATCLQVVGFVTSFVGWIGII) traverse the membrane as a helical segment. Residues 23-82 (VTTSTNDWVVTCSYTIPTCRKMDELGSKGLWADCVMATGLHHCKPLVDILILPGYAQACR) are Extracellular-facing. A helical transmembrane segment spans residues 83–103 (ALMIAASVLGLPGILLLLTVL). Residues 104 to 122 (PCIRMGHEPGVAKYRRAQL) lie on the Cytoplasmic side of the membrane. The helical transmembrane segment at 123-143 (AGVLLILLALCAIVATIWFPV) threads the bilayer. Over 144–157 (CAHREITIVSFGYS) the chain is Extracellular. The helical transmembrane segment at 158–178 (LYAGWIGAVMCLVGGCVIVCC) threads the bilayer. Residues 179–207 (SGDAQSFGENRFYYSSGSSSPTHAKSAHV) are Cytoplasmic-facing. Phosphoserine occurs at positions 193, 194, 197, and 198.

Belongs to the claudin family. In terms of assembly, interacts with tetraspanin-3/TSPAN3. Interacts with OCLN.

Its subcellular location is the cell junction. The protein localises to the tight junction. The protein resides in the cell membrane. Plays a major role in tight junction-specific obliteration of the intercellular space, through calcium-independent cell-adhesion activity. The protein is Claudin-11 (Cldn11) of Rattus norvegicus (Rat).